A 489-amino-acid chain; its full sequence is UDP-glycosyltransferase 85A1 (489 aa).

Residues Ser307, 364–366 (CPQ), 381–389 (HCGWNSILE), and 403–406 (FADQ) contribute to the UDP-alpha-D-glucose site.

The protein belongs to the UDP-glycosyltransferase family. Expressed in root tips, lateral root initials, root apex, shoots, leaf periphery, leaf primordia and flowers.

Functionally, involved in the O-glucosylation of trans-zeatin and dihydrozeatin. Also active in vitro on cis-zeatin. Not active on N-glucosylated substrates. This chain is UDP-glycosyltransferase 85A1 (UGT85A1), found in Arabidopsis thaliana (Mouse-ear cress).